A 171-amino-acid chain; its full sequence is Crossover junction endodeoxyribonuclease RuvC (171 aa).

Catalysis depends on residues aspartate 7, glutamate 67, and aspartate 139. Mg(2+) contacts are provided by aspartate 7, glutamate 67, and aspartate 139.

This sequence belongs to the RuvC family. In terms of assembly, homodimer which binds Holliday junction (HJ) DNA. The HJ becomes 2-fold symmetrical on binding to RuvC with unstacked arms; it has a different conformation from HJ DNA in complex with RuvA. In the full resolvosome a probable DNA-RuvA(4)-RuvB(12)-RuvC(2) complex forms which resolves the HJ. Mg(2+) serves as cofactor.

Its subcellular location is the cytoplasm. The enzyme catalyses Endonucleolytic cleavage at a junction such as a reciprocal single-stranded crossover between two homologous DNA duplexes (Holliday junction).. Functionally, the RuvA-RuvB-RuvC complex processes Holliday junction (HJ) DNA during genetic recombination and DNA repair. Endonuclease that resolves HJ intermediates. Cleaves cruciform DNA by making single-stranded nicks across the HJ at symmetrical positions within the homologous arms, yielding a 5'-phosphate and a 3'-hydroxyl group; requires a central core of homology in the junction. The consensus cleavage sequence is 5'-(A/T)TT(C/G)-3'. Cleavage occurs on the 3'-side of the TT dinucleotide at the point of strand exchange. HJ branch migration catalyzed by RuvA-RuvB allows RuvC to scan DNA until it finds its consensus sequence, where it cleaves and resolves the cruciform DNA. This is Crossover junction endodeoxyribonuclease RuvC from Geotalea uraniireducens (strain Rf4) (Geobacter uraniireducens).